The chain runs to 131 residues: uncharacterized protein (131 aa).

The 116-residue stretch at 1–116 (MYMARMLSEM…EMLEASSIQC (116 aa)) folds into the CMP/dCMP-type deaminase domain.

This is an uncharacterized protein from Caenorhabditis elegans.